Consider the following 147-residue polypeptide: MVKWSKTELTIINDIFSHLDYDDIGPKALSRCLIVYPWTQRHFSGFGNLYNAEAIIGNANVAAHGIKVLHGLDRGLKNMDNIVDAYAELSTLHSEKLHVDPDNFKLLSDCITIVLAAKLGKAFTAETQAAFQKFMAVVVSALGKQYH.

The Globin domain occupies 3 to 147 (KWSKTELTII…VVSALGKQYH (145 aa)). Heme b contacts are provided by His64 and His93.

It belongs to the globin family. Hb1 is a heterotetramer of two alpha chains and two beta-1 chains. In terms of tissue distribution, red blood cells.

In terms of biological role, involved in oxygen transport from gills to the various peripheral tissues. This chain is Hemoglobin subunit beta-1 (hbb1), found in Cygnodraco mawsoni (Antarctic dragonfish).